A 370-amino-acid chain; its full sequence is Tryptophan--tRNA ligase (370 aa).

Residues 75-83 carry the 'HIGH' region motif; the sequence is PSGKMHFGH. The short motif at 255 to 259 is the 'KMSKS' region element; it reads KMSSS.

The protein belongs to the class-I aminoacyl-tRNA synthetase family.

It localises to the cytoplasm. The catalysed reaction is tRNA(Trp) + L-tryptophan + ATP = L-tryptophyl-tRNA(Trp) + AMP + diphosphate + H(+). The polypeptide is Tryptophan--tRNA ligase (Methanocaldococcus jannaschii (strain ATCC 43067 / DSM 2661 / JAL-1 / JCM 10045 / NBRC 100440) (Methanococcus jannaschii)).